The sequence spans 443 residues: Chorionicgonadotropic hormone-like protein (443 aa).

Over residues 263 to 286 (RCAGRPCPRRHRRPCNASKSHRPM) the composition is skewed to basic residues. A disordered region spans residues 263–292 (RCAGRPCPRRHRRPCNASKSHRPMRMQQRD).

To mammalian CGHB.

It localises to the secreted. It is found in the cell wall. Functionally, cell wall protein that resembles the beta subunit of human chorionic gonadotropin. Stimulates growth and change in morphology. This chain is Chorionicgonadotropic hormone-like protein (xcg), found in Stenotrophomonas maltophilia (Pseudomonas maltophilia).